Consider the following 518-residue polypeptide: ATP synthase subunit alpha (518 aa).

Residue 170-177 (GDRQTGKT) participates in ATP binding.

The protein belongs to the ATPase alpha/beta chains family. F-type ATPases have 2 components, CF(1) - the catalytic core - and CF(0) - the membrane proton channel. CF(1) has five subunits: alpha(3), beta(3), gamma(1), delta(1), epsilon(1). CF(0) has three main subunits: a(1), b(2) and c(9-12). The alpha and beta chains form an alternating ring which encloses part of the gamma chain. CF(1) is attached to CF(0) by a central stalk formed by the gamma and epsilon chains, while a peripheral stalk is formed by the delta and b chains.

The protein resides in the cell membrane. It catalyses the reaction ATP + H2O + 4 H(+)(in) = ADP + phosphate + 5 H(+)(out). Produces ATP from ADP in the presence of a proton gradient across the membrane. The alpha chain is a regulatory subunit. This is ATP synthase subunit alpha from Mycoplasmoides gallisepticum (strain R(low / passage 15 / clone 2)) (Mycoplasma gallisepticum).